The following is a 103-amino-acid chain: Small ribosomal subunit protein uS10 (103 aa).

The protein belongs to the universal ribosomal protein uS10 family. As to quaternary structure, part of the 30S ribosomal subunit.

Involved in the binding of tRNA to the ribosomes. The sequence is that of Small ribosomal subunit protein uS10 from Campylobacter jejuni subsp. jejuni serotype O:6 (strain 81116 / NCTC 11828).